The chain runs to 186 residues: Large ribosomal subunit protein uL6 (186 aa).

The protein belongs to the universal ribosomal protein uL6 family. In terms of assembly, part of the 50S ribosomal subunit.

In terms of biological role, this protein binds to the 23S rRNA, and is important in its secondary structure. It is located near the subunit interface in the base of the L7/L12 stalk, and near the tRNA binding site of the peptidyltransferase center. This chain is Large ribosomal subunit protein uL6, found in Hyperthermus butylicus (strain DSM 5456 / JCM 9403 / PLM1-5).